An 87-amino-acid polypeptide reads, in one-letter code: MTKVFCKKYHQELDAIPFQPLPGELGKKIHNEISNKAWQAWLAHQTILINEYRLNLIETKAKEFLKEEMHKFLFEGKEEKPEQFSEI.

Belongs to the Fe(2+)-trafficking protein family.

In terms of biological role, could be a mediator in iron transactions between iron acquisition and iron-requiring processes, such as synthesis and/or repair of Fe-S clusters in biosynthetic enzymes. In Francisella tularensis subsp. mediasiatica (strain FSC147), this protein is Probable Fe(2+)-trafficking protein.